The chain runs to 303 residues: Eukaryotic translation initiation factor 3 subunit F (303 aa).

A compositionally biased stretch (polar residues) spans 1–10 (MSLDTSSSAI). Positions 1–25 (MSLDTSSSAIHLQLPPTSSSLRPPS) are disordered. Positions 12 to 25 (LQLPPTSSSLRPPS) are enriched in low complexity. The MPN domain maps to 27-165 (ITVHPSVIAQ…VKGWVSQPLG (139 aa)).

It belongs to the eIF-3 subunit F family. In terms of assembly, component of the eukaryotic translation initiation factor 3 (eIF-3) complex.

The protein localises to the cytoplasm. Functionally, component of the eukaryotic translation initiation factor 3 (eIF-3) complex, which is involved in protein synthesis of a specialized repertoire of mRNAs and, together with other initiation factors, stimulates binding of mRNA and methionyl-tRNAi to the 40S ribosome. The eIF-3 complex specifically targets and initiates translation of a subset of mRNAs involved in cell proliferation. This chain is Eukaryotic translation initiation factor 3 subunit F, found in Cryptococcus neoformans var. neoformans serotype D (strain B-3501A) (Filobasidiella neoformans).